A 192-amino-acid chain; its full sequence is Small ribosomal subunit protein uS5 (192 aa).

Positions 22 to 85 (LVDKLVTINR…DRAKRAMIRV (64 aa)) constitute an S5 DRBM domain.

The protein belongs to the universal ribosomal protein uS5 family. In terms of assembly, part of the 30S ribosomal subunit. Contacts proteins S4 and S8.

Its function is as follows. With S4 and S12 plays an important role in translational accuracy. Located at the back of the 30S subunit body where it stabilizes the conformation of the head with respect to the body. This Gluconacetobacter diazotrophicus (strain ATCC 49037 / DSM 5601 / CCUG 37298 / CIP 103539 / LMG 7603 / PAl5) protein is Small ribosomal subunit protein uS5.